The sequence spans 489 residues: MKYVCLRSFIKILEKHKKIKRIFVPISPNLEITEISHRTINKEGPALIFENPKGYKMPLLCNLFGTTERVAMAMGGKDIKYIRKLGKIISFLKTPEAPKNIKDILNIAPKFKAMLHMFTKKVNNAPCQEEIFSGSDVDLTSIPIMKCWPNDIGPLITWGLTITKGPYKKRQNIGVYRQQVIEKNKIIMRWLPHRGGALDFLSWKNSKKAYEDKFPVAIALGADPATILSAVTPIPDNLSEYSFAGLLRKNKTEVIKCISSDLEVPAYSEIILEGYLDDKIAEEGPYGDHTGYYNEIERFPILNITHITKRKDSLYHSTYTGKPIDEPSVIGMALNELFIPILQKQFPEIIDFYLPPECCSYRISVVSIKKQYLGHANQIMMGIWSILRQFMYTKFIIVCDDDIDIRNWKDIMWSISTRVDPYRDTLLIKNTPIDYLDFASEKKNLGSKIGIDATNKWPGETTRNWGVPIKMDKIIKDKIDLIWDDLNIF.

Mn(2+) is bound at residue N172. Prenylated FMN-binding positions include 175–177, 189–191, and 194–195; these read VYR, RWL, and RG. E240 provides a ligand contact to Mn(2+). Residue D288 is the Proton donor of the active site.

This sequence belongs to the UbiD family. As to quaternary structure, homohexamer. Prenylated FMN is required as a cofactor. Requires Mn(2+) as cofactor.

The protein resides in the cell membrane. The enzyme catalyses a 4-hydroxy-3-(all-trans-polyprenyl)benzoate + H(+) = a 2-(all-trans-polyprenyl)phenol + CO2. It functions in the pathway cofactor biosynthesis; ubiquinone biosynthesis. Catalyzes the decarboxylation of 3-octaprenyl-4-hydroxy benzoate to 2-octaprenylphenol, an intermediate step in ubiquinone biosynthesis. This Wigglesworthia glossinidia brevipalpis protein is 3-octaprenyl-4-hydroxybenzoate carboxy-lyase.